A 149-amino-acid polypeptide reads, in one-letter code: Calmodulin (149 aa).

The residue at position 2 (A2) is an N-acetylalanine. EF-hand domains lie at 8–43, 44–79, 81–116, and 117–149; these read EQIA…LGQN, PTEA…KMKD, DSEE…LGEK, and LTDE…MMAK. D21, D23, D25, C27, E32, D57, D59, N61, T63, E68, D94, D96, D98, and E105 together coordinate Ca(2+). Position 116 is an N6,N6,N6-trimethyllysine (K116). The Ca(2+) site is built by D130, D132, D134, Q136, and E141.

This sequence belongs to the calmodulin family.

In terms of biological role, calmodulin mediates the control of a large number of enzymes, ion channels and other proteins by Ca(2+). Among the enzymes to be stimulated by the calmodulin-Ca(2+) complex are a number of protein kinases and phosphatases. The chain is Calmodulin from Triticum aestivum (Wheat).